The following is a 1270-amino-acid chain: DNA-directed RNA polymerase subunit beta (1270 aa).

The protein belongs to the RNA polymerase beta chain family. The RNAP catalytic core consists of 2 alpha, 1 beta, 1 beta' and 1 omega subunit. When a sigma factor is associated with the core the holoenzyme is formed, which can initiate transcription.

The enzyme catalyses RNA(n) + a ribonucleoside 5'-triphosphate = RNA(n+1) + diphosphate. In terms of biological role, DNA-dependent RNA polymerase catalyzes the transcription of DNA into RNA using the four ribonucleoside triphosphates as substrates. In Flavobacterium johnsoniae (strain ATCC 17061 / DSM 2064 / JCM 8514 / BCRC 14874 / CCUG 350202 / NBRC 14942 / NCIMB 11054 / UW101) (Cytophaga johnsonae), this protein is DNA-directed RNA polymerase subunit beta.